The sequence spans 417 residues: MLDLHYITENTEDLKKVLELRGFKEVGIIDELKSIIQRKRELQREVDLLREERNKVSKEVGRIKQSGGDITEISASVKLVGEKIKEIETKLEQEENVLININLGLPNILDPKVPNGKSEYDNVVQYEVGKIPSFSFPPKPHFEIGEALNWINFEKGVKLSGARAYTYWKDGAKLERALMNFMLDVHTKEHGYTEVWVPSMVNDESMTATGQYPKFKDEFYRIEKDELNLIPTAEVPLTNLYRDEIIPEDQLPISVTAHTSCFRREAGSYGKDTRGLVRVHQFQKVELVKFCKPEDSEEEHKKMLSHAENILKKLKLPYRVIILCSGDISANSSITYDIEVWMPGLNRFMEISSVSNFRDFQARRGKIRYKSKDGKNQLVHTINGSGLAIGRTYAAILENFQDANGTVHIPEVLKSYF.

232-234 (TAE) is a binding site for L-serine. ATP is bound by residues 263–265 (RRE) and Val-279. Glu-286 is an L-serine binding site. Residue 350–353 (EISS) participates in ATP binding. Ser-385 provides a ligand contact to L-serine.

Belongs to the class-II aminoacyl-tRNA synthetase family. Type-1 seryl-tRNA synthetase subfamily. As to quaternary structure, homodimer. The tRNA molecule binds across the dimer.

The protein resides in the cytoplasm. The catalysed reaction is tRNA(Ser) + L-serine + ATP = L-seryl-tRNA(Ser) + AMP + diphosphate + H(+). The enzyme catalyses tRNA(Sec) + L-serine + ATP = L-seryl-tRNA(Sec) + AMP + diphosphate + H(+). It participates in aminoacyl-tRNA biosynthesis; selenocysteinyl-tRNA(Sec) biosynthesis; L-seryl-tRNA(Sec) from L-serine and tRNA(Sec): step 1/1. In terms of biological role, catalyzes the attachment of serine to tRNA(Ser). Is also able to aminoacylate tRNA(Sec) with serine, to form the misacylated tRNA L-seryl-tRNA(Sec), which will be further converted into selenocysteinyl-tRNA(Sec). The chain is Serine--tRNA ligase from Leptospira borgpetersenii serovar Hardjo-bovis (strain JB197).